A 127-amino-acid chain; its full sequence is Small ribosomal subunit protein uS12 (127 aa).

The disordered stretch occupies residues isoleucine 8–proline 28. Aspartate 89 bears the 3-methylthioaspartic acid mark. The interval leucine 102–lysine 127 is disordered. Residues glycine 113–lysine 127 are compositionally biased toward basic residues.

This sequence belongs to the universal ribosomal protein uS12 family. In terms of assembly, part of the 30S ribosomal subunit. Contacts proteins S8 and S17. May interact with IF1 in the 30S initiation complex.

With S4 and S5 plays an important role in translational accuracy. Its function is as follows. Interacts with and stabilizes bases of the 16S rRNA that are involved in tRNA selection in the A site and with the mRNA backbone. Located at the interface of the 30S and 50S subunits, it traverses the body of the 30S subunit contacting proteins on the other side and probably holding the rRNA structure together. The combined cluster of proteins S8, S12 and S17 appears to hold together the shoulder and platform of the 30S subunit. The polypeptide is Small ribosomal subunit protein uS12 (Nostoc sp. (strain PCC 7120 / SAG 25.82 / UTEX 2576)).